The chain runs to 194 residues: 5'-deoxynucleotidase VP0926 (194 aa).

Substrate-binding positions include 18–19 (RW) and histidine 33. In terms of domain architecture, HD spans 30 to 142 (VSEHSLQVAF…VKQADSICAY (113 aa)). Histidine 33, histidine 68, and aspartate 69 together coordinate a divalent metal cation. Substrate-binding positions include aspartate 69, 77–80 (DLPT), and aspartate 137. Aspartate 137 contacts a divalent metal cation.

Belongs to the 5DNU family. Homodimer. The cofactor is a divalent metal cation.

The protein resides in the cytoplasm. The catalysed reaction is a 2'-deoxyribonucleoside 5'-phosphate + H2O = a 2'-deoxyribonucleoside + phosphate. Functionally, catalyzes the strictly specific dephosphorylation of 2'-deoxyribonucleoside 5'-monophosphates. This is 5'-deoxynucleotidase VP0926 from Vibrio parahaemolyticus serotype O3:K6 (strain RIMD 2210633).